Consider the following 245-residue polypeptide: tRNA pseudouridine synthase A (245 aa).

The active-site Nucleophile is D52. Y111 is a binding site for substrate.

The protein belongs to the tRNA pseudouridine synthase TruA family. As to quaternary structure, homodimer.

It catalyses the reaction uridine(38/39/40) in tRNA = pseudouridine(38/39/40) in tRNA. Functionally, formation of pseudouridine at positions 38, 39 and 40 in the anticodon stem and loop of transfer RNAs. The sequence is that of tRNA pseudouridine synthase A from Rickettsia canadensis (strain McKiel).